Consider the following 362-residue polypeptide: tRNA/tmRNA (uracil-C(5))-methyltransferase (362 aa).

The S-adenosyl-L-methionine site is built by glutamine 186, tyrosine 214, asparagine 219, glutamate 235, and aspartate 295. Cysteine 320 (nucleophile) is an active-site residue. The Proton acceptor role is filled by glutamate 354.

This sequence belongs to the class I-like SAM-binding methyltransferase superfamily. RNA M5U methyltransferase family. TrmA subfamily.

It catalyses the reaction uridine(54) in tRNA + S-adenosyl-L-methionine = 5-methyluridine(54) in tRNA + S-adenosyl-L-homocysteine + H(+). The enzyme catalyses uridine(341) in tmRNA + S-adenosyl-L-methionine = 5-methyluridine(341) in tmRNA + S-adenosyl-L-homocysteine + H(+). Its function is as follows. Dual-specificity methyltransferase that catalyzes the formation of 5-methyluridine at position 54 (m5U54) in all tRNAs, and that of position 341 (m5U341) in tmRNA (transfer-mRNA). The sequence is that of tRNA/tmRNA (uracil-C(5))-methyltransferase from Ectopseudomonas mendocina (strain ymp) (Pseudomonas mendocina).